Here is a 441-residue protein sequence, read N- to C-terminus: Transcription factor bHLH90 (441 aa).

Residues Asn260–Leu309 enclose the bHLH domain.

Homodimer. Expressed constitutively in roots, leaves, stems, and flowers.

Its subcellular location is the nucleus. This Arabidopsis thaliana (Mouse-ear cress) protein is Transcription factor bHLH90 (BHLH90).